Consider the following 228-residue polypeptide: Endo-1,4-beta-xylanase B (228 aa).

The first 19 residues, 1-19, serve as a signal peptide directing secretion; sequence MVSFTYLLAAVSAVTGAVA. Residues 37–227 form the GH11 domain; that stretch reads KRTSPTTGVN…SSGQATMTVS (191 aa). Residue glutamate 122 is the Nucleophile of the active site. Residue glutamate 214 is the Proton donor of the active site.

It belongs to the glycosyl hydrolase 11 (cellulase G) family.

Its subcellular location is the secreted. It carries out the reaction Endohydrolysis of (1-&gt;4)-beta-D-xylosidic linkages in xylans.. It participates in glycan degradation; xylan degradation. Inhibited by the proteinaceous endoxylanase inhibitor I from T.aestivum (TAXI-I). Functionally, endo-1,4-beta-xylanase involved in the hydrolysis of xylan, a major structural heterogeneous polysaccharide found in plant biomass representing the second most abundant polysaccharide in the biosphere, after cellulose. Plays an important role in causing fusarium head blight (FHB) on cereal crops. Induces cell death and hydrogen peroxide accumulation in infected wheat leaves. The polypeptide is Endo-1,4-beta-xylanase B (XYLB) (Gibberella zeae (strain ATCC MYA-4620 / CBS 123657 / FGSC 9075 / NRRL 31084 / PH-1) (Wheat head blight fungus)).